The following is a 231-amino-acid chain: Uroporphyrinogen-III C-methyltransferase (231 aa).

Residues P10, 85 to 87 (GGD), 115 to 116 (TS), M166, and A218 each bind S-adenosyl-L-homocysteine.

The protein belongs to the precorrin methyltransferase family. As to quaternary structure, homodimer.

It catalyses the reaction uroporphyrinogen III + 2 S-adenosyl-L-methionine = precorrin-2 + 2 S-adenosyl-L-homocysteine + H(+). It carries out the reaction uroporphyrinogen III + S-adenosyl-L-methionine = precorrin-1 + S-adenosyl-L-homocysteine + H(+). The enzyme catalyses precorrin-1 + S-adenosyl-L-methionine = precorrin-2 + S-adenosyl-L-homocysteine. It participates in cofactor biosynthesis; adenosylcobalamin biosynthesis; precorrin-2 from uroporphyrinogen III: step 1/1. Its activity is regulated as follows. Does not show substrate inhibition at uroporphyrinogen III concentrations of up to 20 uM, in contrast to SUMT from Sinorhizobium (previously believed to be P.denitrificans). Catalyzes the two successive C-2 and C-7 methylation reactions involved in the conversion of uroporphyrinogen III to precorrin-2 via the intermediate formation of precorrin-1. It is a step in the biosynthesis of both cobalamin (vitamin B12) and coenzyme F430. The protein is Uroporphyrinogen-III C-methyltransferase (cobA) of Methanobacterium ivanovii.